Consider the following 266-residue polypeptide: MRHLALEMISELLDLGLDTIDGWLHTEFRPVPAGVSHNMSLHEMYDLDVTGQEDENEEAVDGVFSDAMLLAAEEGIEMPNLYSPGPLVGGGEMPELQPEEEDLFCYEDGFPPSDSEEGEHSQVETERKMAEAAAAGAAAAARREQDDFRLDCPSVPGHGCSSCDYHRKTSGCPEILCSLCYLRANSMFIYSPVSDSEPDEPDSTTADSNHGSPPTLRCTPPRDLPRPVPVKASPGKRPAVNSLHDLIEEVEQTVPLDLSLKRSRSN.

The tract at residues 39–47 (MSLHEMYDL) is interaction with RB1 in competition with E2F1. A PXLXP motif, interaction with host ZMYND11 motif is present at residues 94–98 (PELQP). An LXCXE motif, interaction with host RB1 motif is present at residues 103–107 (LFCYE). Residues 160–180 (CSSCDYHRKTSGCPEILCSLC) fold into a zinc finger. The interval 193–244 (VSDSEPDEPDSTTADSNHGSPPTLRCTPPRDLPRPVPVKASPGKRPAVNSLH) is disordered. Positions 203–212 (STTADSNHGS) are enriched in polar residues. A PXDLS motif, CTBP-binding motif is present at residues 255 to 259 (PLDLS). The short motif at 261–265 (KRSRS) is the Nuclear localization signal element.

Belongs to the adenoviridae E1A protein family. As to quaternary structure, interacts with host UBE2I; this interaction interferes with polySUMOylation. Interacts with host RB1; this interaction induces the aberrant dissociation of RB1-E2F1 complex thereby disrupting the activity of RB1 and activating E2F1-regulated genes. Interacts with host ATF7; the interaction enhances ATF7-mediated viral transactivation activity which requires the zinc binding domains of both proteins. Isoform early E1A 32 kDa protein and isoform early E1A 26 kDa protein interact (via N-terminus) with CUL1 and E3 ubiquitin ligase RBX1; these interactions inhibit RBX1-CUL1-dependent elongation reaction of ubiquitin chains and attenuate ubiquitination of SCF(FBXW7) target proteins. Interacts (via PXLXP motif) with host ZMYND11/BS69 (via MYND-type zinc finger); this interaction inhibits E1A mediated transactivation. Interacts with host EP300; this interaction stimulates the acetylation of RB1 by recruiting EP300 and RB1 into a multimeric-protein complex. Interacts with host CTBP1 and CTBP2; this interaction seems to potentiate viral replication. Interacts with host DCAF7. Interacts with host DYRK1A. Interacts with host KPNA4; this interaction allows E1A import into the host nucleus. Interacts with host EP400; this interaction stabilizes MYC. Interacts with host TBP protein; this interaction probably disrupts the TBP-TATA complex.

The protein resides in the host nucleus. In terms of biological role, plays a role in viral genome replication by driving entry of quiescent cells into the cell cycle. Stimulation of progression from G1 to S phase allows the virus to efficiently use the cellular DNA replicating machinery to achieve viral genome replication. E1A protein has both transforming and trans-activating activities. Induces the disassembly of the E2F1 transcription factor from RB1 by direct competition for the same binding site on RB1, with subsequent transcriptional activation of E2F1-regulated S-phase genes and of the E2 region of the adenoviral genome. Release of E2F1 leads to the ARF-mediated inhibition of MDM2 and causes TP53/p53 to accumulate because it is not targeted for degradation by MDM2-mediated ubiquitination anymore. This increase in TP53, in turn, would arrest the cell proliferation and direct its death but this effect is counteracted by the viral protein E1B-55K. Inactivation of the ability of RB1 to arrest the cell cycle is critical for cellular transformation, uncontrolled cellular growth and proliferation induced by viral infection. Interaction with RBX1 and CUL1 inhibits ubiquitination of the proteins targeted by SCF(FBXW7) ubiquitin ligase complex, and may be linked to unregulated host cell proliferation. The tumorigenesis-restraining activity of E1A may be related to the disruption of the host CtBP-CtIP complex through the CtBP binding motif. This chain is Early E1A protein, found in Simian adenovirus serotype 7 (SAdV-7).